A 374-amino-acid chain; its full sequence is MDSKWFFIVLISFLLVLPSIVTPYRKSVEITNEEPQRDIYQLEKTNKMAEVGDLGVASFLNILDTSSSSSSSSSSSSSSSSSSSSSSSSSSSSSSSSSSSSSSSSSSSSSSSSSSSSSSSSSSSSSSSSSSSSSSSSSSSSSSSSSSSSSSSSSSSSSSSSSSSSSSSSSSSSSSSSSSSSSSSSSSSSSSSSSSSSSSSSSSSSSSSSSSSSSSSSSSSSSSSSSSSSSSSSSSSSSSSSSSSSSSSSSSSSSSSSSSSSSSSSSSSSSSSSSSSSSSSSSSSSSSSSSSSSSSSSSSSSSSSSSSSSSSSSSSSSSSSSSSSSSSSSSSSSSSSSSSSSSSSSSSSSSSSSSSSSSSSSSSSSSSSSSSGEN.

Positions 1–23 (MDSKWFFIVLISFLLVLPSIVTP) are cleaved as a signal peptide. The segment at 66–374 (SSSSSSSSSS…SSSSSSSGEN (309 aa)) is disordered.

The protein resides in the secreted. This is an uncharacterized protein from Dictyostelium discoideum (Social amoeba).